Consider the following 146-residue polypeptide: MMHMTFYWGIKATILFDFWKTDSWLSYILTLIACFVFSAFYQYLENRRIQFKSLSSSRRAPPPPRSSSGVSAPLIPKSGTRSAAKAASVLLFGVNAAIGYLLMLAAMSFNGGVFIAIVVGLTAGYAVFRSDDGGADTATDDPCPCA.

A helical transmembrane segment spans residues 24–44 (WLSYILTLIACFVFSAFYQYL). A disordered region spans residues 55-74 (SSSRRAPPPPRSSSGVSAPL). A helical membrane pass occupies residues 101-121 (LLMLAAMSFNGGVFIAIVVGL).

The protein belongs to the copper transporter (Ctr) (TC 1.A.56) family. SLC31A subfamily. As to expression, highly expressed in leaves and stems and at lower levels in roots and flowers.

It is found in the membrane. Its function is as follows. Involved in the transport of copper. In Arabidopsis thaliana (Mouse-ear cress), this protein is Copper transporter 5 (COPT5).